The primary structure comprises 527 residues: Catalase (527 aa).

The segment covering 1 to 22 has biased composition (basic and acidic residues); sequence MADSRDPASDQMKLWKEQRAAQ. Residues 1 to 34 form a disordered region; sequence MADSRDPASDQMKLWKEQRAAQKPDVLTTGGGNP. Position 2 is an N-acetylalanine (alanine 2). A Phosphoserine modification is found at serine 9. The residue at position 13 (lysine 13) is an N6-succinyllysine. Residues histidine 75 and asparagine 148 contribute to the active site. Positions 194, 201, 203, and 213 each coordinate NADP(+). The residue at position 221 (lysine 221) is an N6-succinyllysine. Lysine 233 carries the post-translational modification N6-acetyllysine. NADP(+) is bound by residues lysine 237, tryptophan 303, and histidine 305. Position 358 (tyrosine 358) interacts with heme. 2 positions are modified to phosphoserine: serine 422 and serine 434. Residues lysine 449 and lysine 480 each carry the N6-acetyllysine; alternate modification. An N6-succinyllysine; alternate mark is found at lysine 449 and lysine 480. Lysine 499 carries the post-translational modification N6-acetyllysine. Threonine 511 carries the post-translational modification Phosphothreonine. Position 517 is a phosphoserine (serine 517). Residues 524–527 carry the Microbody targeting signal; atypical motif; sequence KANL.

This sequence belongs to the catalase family. As to quaternary structure, homotetramer. Interacts (via microbody targeting signal) with PEX5, monomeric form interacts with PEX5, leading to its translocation into peroxisomes. Heme is required as a cofactor. Requires NADP(+) as cofactor.

The protein resides in the peroxisome matrix. The enzyme catalyses 2 H2O2 = O2 + 2 H2O. In terms of biological role, catalyzes the degradation of hydrogen peroxide (H(2)O(2)) generated by peroxisomal oxidases to water and oxygen, thereby protecting cells from the toxic effects of hydrogen peroxide. Promotes growth of cells including T-cells, B-cells, myeloid leukemia cells, melanoma cells, mastocytoma cells and normal and transformed fibroblast cells. The sequence is that of Catalase (CAT) from Canis lupus familiaris (Dog).